The following is a 247-amino-acid chain: Probable transcriptional regulatory protein BHWA1_01533 (247 aa).

The segment at 1-22 (MSGHSKWASIKHKKAANDSKKG) is disordered.

Belongs to the TACO1 family.

It localises to the cytoplasm. The chain is Probable transcriptional regulatory protein BHWA1_01533 from Brachyspira hyodysenteriae (strain ATCC 49526 / WA1).